The following is a 2809-amino-acid chain: Fibrillin-3 (2809 aa).

Positions 1–31 (MTLEGLYLARGPLARLLLAWSALLCMAGGQG) are cleaved as a signal peptide. Residues 32–48 (RWDGALEAAGPGRVRRR) constitute a propeptide that is removed on maturation. In terms of domain architecture, EGF-like 1 spans 147-179 (GQPICDRGCHNGGRCIGPNRCACVYGFMGPQCE). 3 cysteine pairs are disulfide-bonded: C151-C161, C155-C167, and C169-C178. Residues 185 to 237 (GPCFGQVGPEGCQHQLTGLVCTKALCCATVGRAWGLPCELCPAQPHPCRRGFI) enclose the TB 1 domain. One can recognise an EGF-like 2; calcium-binding domain in the interval 247–288 (DVDECQAVPGLCQGGSCVNMVGSFHCRCPVGHRLSDSSAACE). Disulfide bonds link C251-C263, C258-C272, and C274-C287. The 54-residue stretch at 293-346 (GACFSVLFGGRCAGDLAGHYTRRQCCCDRGRCWAAGPVPELCPPRGSNEFQQLC) folds into the TB 2 domain. Residue N406 is glycosylated (N-linked (GlcNAc...) asparagine). One can recognise an EGF-like 3 domain in the interval 408 to 448 (TIDICRHFTNLCLNGRCLPTPSSYRCECNVGYTQDVRGECI). Cystine bridges form between C412/C424, C419/C433, C435/C447, C453/C463, C458/C472, C474/C487, C493/C505, C500/C514, C516/C529, C535/C546, C541/C555, C557/C570, C576/C587, C582/C596, and C598/C611. The 40-residue stretch at 449-488 (DVDECTSSPCHHGDCVNIPGTYHCRCYPGFQATPTRQACV) folds into the EGF-like 4; calcium-binding domain. One can recognise an EGF-like 5; calcium-binding domain in the interval 489 to 530 (DVDECIVSGGLCHLGRCVNTEGSFQCVCNAGFELSPDGKNCV). An EGF-like 6; calcium-binding domain is found at 531-571 (DHNECATSTMCVNGVCLNEDGSFSCLCKPGFLLAPGGHYCM). In terms of domain architecture, EGF-like 7; calcium-binding spans 572–612 (DIDECQTPGICVNGHCTNTEGSFRCQCLGGLAVGTDGRVCV). One can recognise a TB 3 domain in the interval 618–670 (STCYGAIEKGSCARPFPGTVTKSECCCANPDHGFGEPCQLCPAKDSAEFQALC). An EGF-like 8; calcium-binding domain is found at 682-723 (DINECALDPEVCANGVCENLRGSYRCVCNLGYEAGASGKDCT). Disulfide bonds link C686-C698, C693-C707, C709-C722, C728-C740, C735-C749, C751-C764, C770-C780, C775-C789, and C791-C804. In terms of domain architecture, EGF-like 9; calcium-binding spans 724–765 (DVDECALNSLLCDNGWCQNSPGSYSCSCPPGFHFWQDTEICK). An EGF-like 10; calcium-binding domain is found at 766–805 (DVDECLSSPCVSGVCRNLAGSYTCKCGPGSRLDPSGTFCL). Positions 810-861 (GTCWLKIQESRCEVNLQGASLRSECCATLGAAWGSPCERCEIDPACARGFAR) constitute a TB 4 domain. The region spanning 869-910 (DVNECESFPGVCPNGRCVNTAGSFRCECPEGLMLDASGRLCV) is the EGF-like 11; calcium-binding domain. Cystine bridges form between C873/C885, C880/C894, and C896/C909. The TB 5 domain occupies 915-966 (EPCFLRWDEDECGVTLPGKYRMDVCCCSIGAVWGVECEACPDPESLEFASLC). One can recognise an EGF-like 12; calcium-binding domain in the interval 986–1027 (DVNECKVFPGLCTHGTCRNTVGSFHCACAGGFALDAQERNCT). Disulfide bonds link C990–C1002, C997–C1011, C1013–C1026, C1032–C1044, C1039–C1053, C1055–C1069, C1075–C1087, C1082–C1096, C1098–C1111, C1117–C1129, C1124–C1138, C1140–C1153, C1159–C1170, C1166–C1179, C1181–C1194, C1200–C1212, C1207–C1221, C1223–C1236, C1242–C1254, C1249–C1263, C1265–C1278, C1284–C1297, C1291–C1306, C1308–C1319, C1325–C1338, C1332–C1347, C1349–C1360, C1366–C1378, C1373–C1387, C1389–C1402, C1408–C1419, C1414–C1428, C1430–C1443, C1449–C1460, C1455–C1469, and C1471–C1484. N1025 carries an N-linked (GlcNAc...) asparagine glycan. The 43-residue stretch at 1028 to 1070 (DIDECRISPDLCGQGTCVNTPGSFECECFPGYESGFMLMKNCM) folds into the EGF-like 13; calcium-binding domain. In terms of domain architecture, EGF-like 14; calcium-binding spans 1071 to 1112 (DVDECARDPLLCRGGTCTNTDGSYKCQCPPGHELTAKGTACE). Residues 1113–1154 (DIDECSLSDGLCPHGQCVNVIGAFQCSCHAGFQSTPDRQGCV) form the EGF-like 15; calcium-binding domain. The EGF-like 16; calcium-binding domain maps to 1155-1195 (DINECRVQNGGCDVHCINTEGSYRCSCGQGYSLMPDGRACA). One can recognise an EGF-like 17 domain in the interval 1196-1237 (DVDECEENPRVCDQGHCTNMPGGHRCLCYDGFMATPDMRTCV). Residues 1238 to 1279 (DVDECDLNPHICLHGDCENTKGSFVCHCQLGYMVRKGATGCS) form the EGF-like 18; calcium-binding domain. The EGF-like 19; calcium-binding domain maps to 1280-1320 (DVDECEVGGHNCDSHASCLNIPGSFSCRCLPGWVGDGFECH). An EGF-like 20; calcium-binding domain is found at 1321–1361 (DLDECVSQEHRCSPRGDCLNVPGSYRCTCRQGFAGDGFFCE). An EGF-like 21; calcium-binding domain is found at 1362–1403 (DRDECAENVDLCDNGQCLNAPGGYRCECEMGFDPTEDHRACQ). The EGF-like 22; calcium-binding domain maps to 1404–1444 (DVDECAQGNLCAFGSCENLPGMFRCICNGGYELDRGGGNCT). N1442 carries an N-linked (GlcNAc...) asparagine glycan. One can recognise an EGF-like 23; calcium-binding domain in the interval 1445 to 1485 (DINECADPVNCINGVCINTPGSYLCSCPQDFELNPSGVGCV). Positions 1490–1546 (GNCFLETHDRGDSGISCSAEIGVGVTRASCCCSLGRAWGNPCELCPMANTTEYRTLC) constitute a TB 6 domain. Residue N1538 is glycosylated (N-linked (GlcNAc...) asparagine). In terms of domain architecture, EGF-like 24; calcium-binding spans 1563 to 1604 (DIDECQELPGLCQGGDCVNTFGSFQCECPPGYHLSEHTRICE). Cystine bridges form between C1567-C1579, C1574-C1588, C1590-C1603, C1609-C1621, C1616-C1630, and C1632-C1645. The region spanning 1605 to 1646 (DIDECSTHSGICGPGTCYNTLGNYTCVCPAEYLQVNGGNNCM) is the EGF-like 25; calcium-binding domain. N-linked (GlcNAc...) asparagine glycosylation is present at N1627. The 53-residue stretch at 1651-1703 (SVCFRHYNGTCQNELAFNVTRKMCCCSYNIGQAWNRPCEACPTPISPDYQILC) folds into the TB 7 domain. N1658 and N1668 each carry an N-linked (GlcNAc...) asparagine glycan. An EGF-like 26; calcium-binding domain is found at 1721-1762 (DIDECGEIPAICANGICINQIGSFRCECPAGFNYNSILLACE). 21 disulfides stabilise this stretch: C1725–C1737, C1732–C1746, C1748–C1761, C1767–C1780, C1774–C1789, C1791–C1803, C1809–C1821, C1816–C1830, C1832–C1845, C1851–C1861, C1856–C1870, C1872–C1884, C1890–C1903, C1898–C1912, C1914–C1927, C1933–C1945, C1940–C1954, C1956–C1967, C1973–C1985, C1980–C1994, and C1996–C2009. In terms of domain architecture, EGF-like 27; calcium-binding spans 1763-1804 (DVDECGSRESPCQQNADCINIPGSYRCKCTRGYKLSPGGACV). The region spanning 1805-1846 (GRNECREIPNVCSHGDCMDTEGSYMCLCHRGFQASADQTLCM) is the EGF-like 28 domain. In terms of domain architecture, EGF-like 29; calcium-binding spans 1847–1885 (DIDECDRQPCGNGTCKNIIGSYNCLCFPGFVVTHNGDCV). An N-linked (GlcNAc...) asparagine glycan is attached at N1858. Residues 1886 to 1928 (DFDECTTLVGQVCRFGHCLNTAGSFHCLCQDGFELTADGKNCV) form the EGF-like 30; calcium-binding domain. An EGF-like 31; calcium-binding domain is found at 1929–1968 (DTNECLSLAGTCLPGTCQNLEGSFRCICPPGFQVQSDHCI). Residues 1969–2010 (DIDECSEEPNLCLFGTCTNSPGSFQCLCPPGFVLSDNGHRCF) form the EGF-like 32; calcium-binding domain. The TB 8 domain occupies 2015-2068 (SFCFTRFEAGKCSVPKAFNTTKTRCCCSKRPGEGWGDPCELCPQEGSAAFQELC). The N-linked (GlcNAc...) asparagine glycan is linked to N2033. Residues 2084 to 2125 (DVNECAENPGVCTNGVCVNTDGSFRCECPFGYSLDFTGINCV) enclose the EGF-like 33; calcium-binding domain. Disulfide bonds link C2088–C2100, C2095–C2109, C2111–C2124, C2130–C2141, C2136–C2150, C2152–C2164, C2170–C2181, C2177–C2190, C2192–C2205, C2211–C2225, C2218–C2234, C2236–C2250, C2256–C2268, C2263–C2277, and C2279–C2292. The 40-residue stretch at 2126–2165 (DTDECSVGHPCGQGTCTNVIGGFECACADGFEPGLMMTCE) folds into the EGF-like 34; calcium-binding domain. Residues 2166 to 2206 (DIDECSLNPLLCAFRCHNTEGSYLCTCPAGYTLREDGAMCR) enclose the EGF-like 35; calcium-binding domain. An EGF-like 36; calcium-binding domain is found at 2207-2251 (DVDECADGQQDCHARGMECKNLIGTFACVCPPGMRPLPGSGEGCT). An EGF-like 37; calcium-binding domain is found at 2252–2293 (DDNECHAQPDLCVNGRCVNTAGSFRCDCDEGFQPSPTLTECH). The 54-residue stretch at 2298–2351 (GPCFAEVLQTMCRSLSSSSEAVTRAECCCGGGRGWGPRCELCPLPGTSAYRKLC) folds into the TB 9 domain. One can recognise an EGF-like 38; calcium-binding domain in the interval 2363–2404 (DVDECRMLAHLCAHGECINSLGSFRCHCQAGYTPDATATTCL). Cystine bridges form between C2367/C2379, C2374/C2388, C2390/C2403, C2409/C2420, C2416/C2429, C2431/C2444, C2450/C2461, C2457/C2470, C2472/C2483, C2489/C2502, C2496/C2511, C2513/C2526, C2532/C2542, C2538/C2551, C2553/C2566, C2572/C2584, C2579/C2593, C2595/C2608, C2614/C2625, C2621/C2634, and C2636/C2648. In terms of domain architecture, EGF-like 39; calcium-binding spans 2405–2445 (DMDECSQVPKPCTFLCKNTKGSFLCSCPRGYLLEEDGRTCK). Residues 2446 to 2484 (DLDECTSRQHNCQFLCVNTVGAFTCRCPPGFTQHHQACF) enclose the EGF-like 40; calcium-binding domain. The region spanning 2485–2527 (DNDECSAQPGPCGAHGHCHNTPGSFRCECHQGFTLVSSGHGCE) is the EGF-like 41; calcium-binding domain. One can recognise an EGF-like 42; calcium-binding domain in the interval 2528–2567 (DVNECDGPHRCQHGCQNQLGGYRCSCPQGFTQHSQWAQCV). The 42-residue stretch at 2568–2609 (DENECALSPPTCGSASCRNTLGGFRCVCPSGFDFDQALGGCQ) folds into the EGF-like 43; calcium-binding domain. The region spanning 2610-2649 (EVDECAGRRGPCSYSCANTPGGFLCGCPQGYFRAGQGHCV) is the EGF-like 44; calcium-binding domain. N2713 is a glycosylation site (N-linked (GlcNAc...) asparagine).

Belongs to the fibrillin family. Post-translationally, probably forms intermolecular disulfide bonds either with other FBN3 molecules or with other components of the microfibrils. As to expression, predominantly expressed in connective tissues such as skeletal muscle, tendon, skin, perichondrium and periosteum. Highly expressed in fetal lung, brain, kidney. Expressed at low level in prostate, testis, mammary gland, uterus, ovary, placenta, bladder, adrenal gland, thyroid, fetal thymus, fetal liver, liver, fetal heart and heart.

The protein localises to the secreted. Its subcellular location is the extracellular space. The protein resides in the extracellular matrix. Its function is as follows. Fibrillins are structural components of 10-12 nm extracellular calcium-binding microfibrils, which occur either in association with elastin or in elastin-free bundles. Fibrillin-containing microfibrils provide long-term force bearing structural support. The polypeptide is Fibrillin-3 (FBN3) (Homo sapiens (Human)).